The primary structure comprises 691 residues: Pentatricopeptide repeat-containing protein At5g27110 (691 aa).

PPR repeat units follow at residues 38–68, 70–104, 106–140, 141–171, 172–206, 207–241, 242–272, 273–307, 308–342, 343–373, 374–408, 409–443, 444–474, 475–509, 510–540, and 546–576; these read DVVLCKSLINVYFTCKDHCSARHVFENFDIR, DVYIWNSLMSGYSKNSMFHDTLEVFKRLLNCSICV, DSFTFPNVIKAYGALGREFLGRMIHTLVVKSGYVC, DVVVASSLVGMYAKFNLFENSLQVFDEMPER, DVASWNTVISCFYQSGEAEKALELFGRMESSGFEP, NSVSLTVAISACSRLLWLERGKEIHRKCVKKGFEL, DEYVNSALVDMYGKCDCLEVAREVFQKMPRK, SLVAWNSMIKGYVAKGDSKSCVEILNRMIIEGTRP, SQTTLTSILMACSRSRNLLHGKFIHGYVIRSVVNA, DIYVNCSLIDLYFKCGEANLAETVFSKTQKD, VAESWNVMISSYISVGNWFKAVEVYDQMVSVGVKP, DVVTFTSVLPACSQLAALEKGKQIHLSISESRLET, DELLLSALLDMYSKCGNEKEAFRIFNSIPKK, DVVSWTVMISAYGSHGQPREALYQFDEMQKFGLKP, DGVTLLAVLSACGHAGLIDEGLKFFSQMRSK, and IIEHYSCMIDILGRAGRLLEAYEIIQQTPET. Positions 582–657 are type E motif; it reads LLSTLFSACC…KPGCSWIEMS (76 aa). The segment at 658-688 is type E(+) motif; sequence DKVCHFFAEDRSHLRAENVYECLALLSGHME.

Belongs to the PPR family. PCMP-E subfamily.

The chain is Pentatricopeptide repeat-containing protein At5g27110 (PCMP-E14) from Arabidopsis thaliana (Mouse-ear cress).